The sequence spans 144 residues: MKLLVKKLREDAALPFYATSGASGLDLFCVDDVVVIRPFERVLVSTGIAIELPEGYEAQIRPRSGLALKKGVTVLNSPGTIDHDYRGEIKVILINLSDKEVIIEKGERIAQMVIVPVLKVEVVEAKELSNTQRQDGGFGSTGMK.

Substrate is bound by residues 63–65 (RSG), asparagine 76, 80–82 (TID), and lysine 90.

It belongs to the dUTPase family. It depends on Mg(2+) as a cofactor.

The catalysed reaction is dUTP + H2O = dUMP + diphosphate + H(+). It functions in the pathway pyrimidine metabolism; dUMP biosynthesis; dUMP from dCTP (dUTP route): step 2/2. Its function is as follows. This enzyme is involved in nucleotide metabolism: it produces dUMP, the immediate precursor of thymidine nucleotides and it decreases the intracellular concentration of dUTP so that uracil cannot be incorporated into DNA. The polypeptide is Deoxyuridine 5'-triphosphate nucleotidohydrolase (Hydrogenobaculum sp. (strain Y04AAS1)).